Here is a 607-residue protein sequence, read N- to C-terminus: Phosphatidylinositol 4-kinase LSB6 (607 aa).

Positions 73 to 88 are enriched in polar residues; sequence NVPSESPRPDQTSGSN. The tract at residues 73 to 93 is disordered; the sequence is NVPSESPRPDQTSGSNPAVGL. The region spanning 161–522 is the PI3K/PI4K catalytic domain; it reads GRELERIQTG…LVRRTRCQVI (362 aa). Residues 167–173 are G-loop; sequence IQTGSSG. The interval 318–356 is disordered; that stretch reads KSSGEDINHKPETTRNLTDETEPSKQINSSPISTESEEN. The span at 319-330 shows a compositional bias: basic and acidic residues; it reads SSGEDINHKPET. Polar residues predominate over residues 341 to 351; the sequence is SKQINSSPIST. The tract at residues 384 to 392 is catalytic loop; that stretch reads RNTDRGLDN. The tract at residues 411 to 431 is activation loop; the sequence is AIDNGLSFPWKHPDEWRLYPY.

Belongs to the PI3/PI4-kinase family. As to quaternary structure, interacts with LAS17. The cofactor is Mg(2+). Mn(2+) serves as cofactor.

It localises to the cell membrane. It is found in the vacuole membrane. The enzyme catalyses a 1,2-diacyl-sn-glycero-3-phospho-(1D-myo-inositol) + ATP = a 1,2-diacyl-sn-glycero-3-phospho-(1D-myo-inositol 4-phosphate) + ADP + H(+). May play a role in endocytic and/or exocytic pathways. This chain is Phosphatidylinositol 4-kinase LSB6 (LSB6), found in Saccharomyces cerevisiae (strain ATCC 204508 / S288c) (Baker's yeast).